The sequence spans 1205 residues: MEPGPARPRLAPAARPGWGRAAGCRRRGGPARHGRASGQEDATTAGRQAGGGVRGEGTPAAGDGLGRPLGPTPSQSRFQVDPVSENAGRAAAAAAAAAAAAAAAGAAGKETPAAGKAGGESGVAKGSEEAKGRFRVNFVDPAASSSADDSLSDAAGVGGDGPNVSFQNGGDTVLSEGSSLHSGGGSGHHQQYYYDTHTNTYYLRTFGHNTMDAVPRIDHYRHTAAQLGEKLLRPSLAELHDELEKEPFEDGFANGEESTPTRDAVVAYTAESKGVVKFGWIKGVLVRCMLNIWGVMLFIRLSWIVGQAGIGLSVVVIAMATVVTTITGLSTSAIATNGFVRGGGAYYLISRSLGPEFGGAIGLIFAFANAVAVAMYVVGFAETVVELLKEHSILMIDEINDIRIIGAITVVILLGISVAGMEWEAKAQIVLLVILLLAIADFVIGTFISLESKKPKGFFGYKSEIFNENFGPDFREEETFFSVFAIFFPAATGILAGANISGDLADPQSAIPKGTLLAILITTVVYIGIAVSVGSCVVRDATGNVNDTITTELTNCTSAACKLNFDFSYCESNTCSYGLMNNFQVMSMVSGFAPLISAGIFSATLSSALASLVSAPKIFQALCKDNIYPAFQMFAKGYGKNNEPLRGYILTFLIALGFILIAELNVIAPIISNFFLASYALINFSVFHASLAKSPGWRPAFKYYNMWISLIGAILCCIVMFVINWWAALLTYVIVLGLYIYVTYKKPDVNWGSSTQALTYLSALQHSIRLSGVEDHVKNFRPQCLVMTGSPNSRPALLHLVHDFTKNVGLMICGHVHMGPRRQAMKEMSIDQARYQRWLIKNKMKAFYAPVHADDLREGAQYLMQAAGLGRMKPNTLVLGFKKDWLQADMRDVDMYINLFHDAFDIQFGVVVIRLKEGLDISHLQGQEELLSSQEKSPGTKDVVVNVDYSKKSDQDTCKSSGEKSITQKDEEEDGKTPTQPLLKKESKGPIVPLNVADQKLLEASTQFQKKQGKNTIDVWWLFDDGGLTLLIPYLLTTKKKWKDCKIRVFIGGKINRIDHDRRAMATLLSKFRIDFSDIMVLGDINTKPKKENIIAFDDMIEPYRLHEDDKEQDIADKMKEDEPWRITDNELELYKTKTYRQIRLNELLKEHSSTANIIVMSLPVARKGAVSSALYMAWLEALSKDLPPVLLVRGNHQSVLTFYS.

Residue Met1 is modified to N-acetylmethionine. Low complexity predominate over residues 1 to 22 (MEPGPARPRLAPAARPGWGRAA). The tract at residues 1–102 (MEPGPARPRL…AAAAAAAAAA (102 aa)) is disordered. The Cytoplasmic portion of the chain corresponds to 1–279 (MEPGPARPRL…AESKGVVKFG (279 aa)). Over residues 23–35 (GCRRRGGPARHGR) the composition is skewed to basic residues. Phosphoserine is present on residues Ser74 and Ser76. The short motif at 77 to 80 (RFQV) is the RFXV motif 1 element. Positions 87 to 102 (AGRAAAAAAAAAAAAA) are enriched in low complexity. The RFXV motif 2 motif lies at 133 to 136 (RFRV). Over residues 143-155 (ASSSADDSLSDAA) the composition is skewed to low complexity. Residues 143-187 (ASSSADDSLSDAAGVGGDGPNVSFQNGGDTVLSEGSSLHSGGGSG) are disordered. Residues Thr196, Thr200, Thr205, Thr210, and Thr223 each carry the phosphothreonine modification. Ser235 bears the Phosphoserine mark. Residue Thr259 is modified to Phosphothreonine. A discontinuously helical membrane pass occupies residues 280–309 (WIKGVLVRCMLNIWGVMLFIRLSWIVGQAG). Leu290 is a Na(+) binding site. K(+) contacts are provided by Asn291 and Ile292. Position 293 (Trp293) interacts with Na(+). Chloride is bound by residues Gly294, Val295, and Met296. A helical transmembrane segment spans residues 310–329 (IGLSVVVIAMATVVTTITGL). At 330 to 360 (STSAIATNGFVRGGGAYYLISRSLGPEFGGA) the chain is on the cytoplasmic side. Residues 361–388 (IGLIFAFANAVAVAMYVVGFAETVVELL) traverse the membrane as a helical segment. Phe365 contributes to the chloride binding site. Tyr376 is a binding site for K(+). Over 389-398 (KEHSILMIDE) the chain is Extracellular. A helical transmembrane segment spans residues 399-422 (INDIRIIGAITVVILLGISVAGME). The Cytoplasmic segment spans residues 423–425 (WEA). Residues 426 to 447 (KAQIVLLVILLLAIADFVIGTF) form a helical membrane-spanning segment. Topologically, residues 448 to 479 (ISLESKKPKGFFGYKSEIFNENFGPDFREEET) are extracellular. A discontinuously helical transmembrane segment spans residues 480–497 (FFSVFAIFFPAATGILAG). Residues Pro489, Ala490, and Thr492 each contribute to the K(+) site. Positions 489 and 490 each coordinate chloride. Chloride-binding residues include Gly493 and Ile494. Topologically, residues 498–512 (ANISGDLADPQSAIP) are cytoplasmic. A helical transmembrane segment spans residues 513-534 (KGTLLAILITTVVYIGIAVSVG). The Extracellular segment spans residues 535 to 591 (SCVVRDATGNVNDTITTELTNCTSAACKLNFDFSYCESNTCSYGLMNNFQVMSMVSG). Residues Asn546 and Asn555 are each glycosylated (N-linked (GlcNAc...) asparagine). Intrachain disulfides connect Cys556–Cys561 and Cys570–Cys575. A helical membrane pass occupies residues 592–616 (FAPLISAGIFSATLSSALASLVSAP). Residues Ala603, Ser606, and Ser607 each contribute to the Na(+) site. At 617 to 644 (KIFQALCKDNIYPAFQMFAKGYGKNNEP) the chain is on the cytoplasmic side. 2 consecutive transmembrane segments (helical) span residues 645–665 (LRGYILTFLIALGFILIAELN) and 666–684 (VIAPIISNFFLASYALINF). Residues Phe675 and Tyr679 each coordinate chloride. At 685–707 (SVFHASLAKSPGWRPAFKYYNMW) the chain is on the cytoplasmic side. 2 helical membrane passes run 708-725 (ISLIGAILCCIVMFVINW) and 726-738 (WAALLTYVIVLGL). At 739–1205 (YIYVTYKKPD…NHQSVLTFYS (467 aa)) the chain is on the cytoplasmic side. The interval 754 to 771 (STQALTYLSALQHSIRLS) is scissor helix. 2 positions are modified to phosphoserine: Ser933 and Ser937. Residues 953 to 986 (SDQDTCKSSGEKSITQKDEEEDGKTPTQPLLKKE) form a disordered region. Ser987 carries the post-translational modification Phosphoserine.

This sequence belongs to the SLC12A transporter family. In terms of assembly, homodimer; adopts a domain-swap conformation at the scissor helices connecting the transmembrane domain and C-terminal domain. Post-translationally, phosphorylated at Thr-196, Thr-200 and Thr-205 by OXSR1/OSR1 and STK39/SPAK downstream of WNK kinases (WNK1, WNK2, WNK3 or WNK4), promoting its activity. Widely expressed. High expression found in the cochlea, cochlear lateral wall, and the choroid plexus. Lower expression found in the cerebellum and the cortex.

It is found in the basolateral cell membrane. The catalysed reaction is K(+)(out) + 2 chloride(out) + Na(+)(out) = K(+)(in) + 2 chloride(in) + Na(+)(in). With respect to regulation, activated following phosphorylation by OXSR1/OSR1 and STK39/SPAK downstream of WNK kinases (WNK1, WNK2, WNK3 or WNK4). Inhibited by bumetanide and furosemide. Functionally, cation-chloride cotransporter which mediates the electroneutral transport of chloride, potassium and/or sodium ions across the membrane. Plays a vital role in the regulation of ionic balance and cell volume. The polypeptide is Solute carrier family 12 member 2 (Slc12a2) (Mus musculus (Mouse)).